A 262-amino-acid chain; its full sequence is Demethyldecarbamoylnovobiocin O-methyltransferase (262 aa).

64-65 is an S-adenosyl-L-methionine binding site; that stretch reads TM. Catalysis depends on glutamate 72, which acts as the Proton acceptor. Residues 92–96, 122–126, phenylalanine 178, 196–197, and serine 202 each bind S-adenosyl-L-methionine; these read ETGVW, DSFQG, and DG. Aspartate 196 provides a ligand contact to Mg(2+). Aspartate 223 and aspartate 224 together coordinate Mg(2+).

This sequence belongs to the methyltransferase TylF/MycF family. Homodimer. Mg(2+) is required as a cofactor.

The catalysed reaction is desmethyldescarbamoylnovobiocin + S-adenosyl-L-methionine = descarbamoylnovobiocin + S-adenosyl-L-homocysteine + H(+). It participates in antibiotic biosynthesis; novobiocin biosynthesis. S-adenosyl-L-methionine-dependent O-methyltransferase that methylates at 4-OH of the noviose moiety, the penultimate step in the novobiocin biosynthesis pathway. Novobiocin is an aminocoumarin family antibiotic that targets bacterial DNA gyrases. This chain is Demethyldecarbamoylnovobiocin O-methyltransferase (novP), found in Streptomyces niveus (Streptomyces spheroides).